The chain runs to 117 residues: UPF0342 protein LBUL_1430 (117 aa).

This sequence belongs to the UPF0342 family.

The chain is UPF0342 protein LBUL_1430 from Lactobacillus delbrueckii subsp. bulgaricus (strain ATCC BAA-365 / Lb-18).